We begin with the raw amino-acid sequence, 540 residues long: 2,3-bisphosphoglycerate-independent phosphoglycerate mutase (540 aa).

The Mn(2+) site is built by aspartate 24 and serine 74. Serine 74 acts as the Phosphoserine intermediate in catalysis. Substrate-binding positions include histidine 135, 165 to 166 (RD), arginine 197, arginine 203, 268 to 271 (RPDR), and lysine 341. 5 residues coordinate Mn(2+): aspartate 408, histidine 412, aspartate 449, histidine 450, and histidine 467.

It belongs to the BPG-independent phosphoglycerate mutase family. Monomer. Mn(2+) is required as a cofactor.

It carries out the reaction (2R)-2-phosphoglycerate = (2R)-3-phosphoglycerate. Its pathway is carbohydrate degradation; glycolysis; pyruvate from D-glyceraldehyde 3-phosphate: step 3/5. In terms of biological role, catalyzes the interconversion of 2-phosphoglycerate and 3-phosphoglycerate. The sequence is that of 2,3-bisphosphoglycerate-independent phosphoglycerate mutase from Prochlorococcus marinus (strain SARG / CCMP1375 / SS120).